The primary structure comprises 396 residues: ATP-dependent RNA helicase eIF4A (396 aa).

The Q motif signature appears at 22-50 (YSFDDLKLKEELLRGIFGYGFVEPSAIQQ). In terms of domain architecture, Helicase ATP-binding spans 53 to 223 (ILPIIEGKDV…SKFMKDPVRI (171 aa)). 66 to 73 (AQSGTGKT) provides a ligand contact to ATP. The DEAD box motif lies at 171–174 (DEAD). The Helicase C-terminal domain maps to 234–395 (GIGQYYVNVE…ELPSSISELF (162 aa)).

This sequence belongs to the DEAD box helicase family. eIF4A subfamily. As to quaternary structure, component of the eIF4F complex, which composition varies with external and internal environmental conditions. It is composed of at least eIF4A, eIF4E and eIF4G.

It is found in the cytoplasm. The enzyme catalyses ATP + H2O = ADP + phosphate + H(+). ATP-dependent RNA helicase which is a subunit of the eIF4F complex involved in cap recognition and is required for mRNA binding to ribosome. In the current model of translation initiation, eIF4A unwinds RNA secondary structures in the 5'-UTR of mRNAs which is necessary to allow efficient binding of the small ribosomal subunit, and subsequent scanning for the initiator codon. This Kluyveromyces lactis (strain ATCC 8585 / CBS 2359 / DSM 70799 / NBRC 1267 / NRRL Y-1140 / WM37) (Yeast) protein is ATP-dependent RNA helicase eIF4A (TIF1).